A 468-amino-acid polypeptide reads, in one-letter code: GDNF family receptor alpha-1 (468 aa).

Residues Met-1–Gly-24 form the signal peptide. A run of 3 repeats spans residues Asp-25–Asn-113, Lys-150–Arg-238, and Glu-239–Ile-342. An intrachain disulfide couples Cys-36 to Cys-42. Asn-59 is a glycosylation site (N-linked (GlcNAc...) asparagine). Cystine bridges form between Cys-154/Cys-214, Cys-161/Cys-167, Cys-178/Cys-192, Cys-187/Cys-233, Cys-216/Cys-221, Cys-243/Cys-313, Cys-250/Cys-256, Cys-267/Cys-285, Cys-277/Cys-337, and Cys-315/Cys-325. Asn-347 and Asn-406 each carry an N-linked (GlcNAc...) asparagine glycan. Ser-430 carries the GPI-anchor amidated serine lipid modification. A propeptide spans His-431–Ser-468 (removed in mature form).

It belongs to the GDNFR family. Interacts with GDNF ligand and RET: forms a 2:2:2 ternary complex composed of GDNF ligand, GFRA1 and RET receptor. Interacts with SORL1, either alone or in complex with GDNF. Interaction between SORL1 and GFRA1 leads to GFRA1 internalization, but not degradation. As to expression, expressed in the brain, in hippocampal neurons (at protein level). Isoform 1 and isoform 2 are expressed in heart, brain, lung, liver, kidney and testis.

Its subcellular location is the cell membrane. It is found in the golgi apparatus. The protein localises to the trans-Golgi network. The protein resides in the endosome. It localises to the multivesicular body. Functionally, coreceptor for GDNF, a neurotrophic factor that enhances survival and morphological differentiation of dopaminergic neurons and increases their high-affinity dopamine uptake. GDNF-binding leads to autophosphorylation and activation of the RET receptor. The chain is GDNF family receptor alpha-1 (Gfra1) from Mus musculus (Mouse).